The following is a 122-amino-acid chain: Serum amyloid A-2 protein (122 aa).

The signal sequence occupies residues 1–18 (MKLLSGLLLCSLVLGVSG). Pyrrolidone carboxylic acid is present on Gln19. Residues 90 to 122 (GAEDSMADQAANEWGRSGKDPNHFRPKGLPDKY) form a disordered region. Residues 105-122 (RSGKDPNHFRPKGLPDKY) show a composition bias toward basic and acidic residues.

The protein belongs to the SAA family. In terms of assembly, apolipoprotein of the HDL complex. As to expression, expressed by the liver; secreted in plasma.

The protein localises to the secreted. Functionally, major acute phase reactant. The chain is Serum amyloid A-2 protein (SAA2) from Oryctolagus cuniculus (Rabbit).